A 165-amino-acid chain; its full sequence is Coatomer subunit zeta (165 aa).

It belongs to the adaptor complexes small subunit family. In terms of assembly, oligomeric complex that consists of at least the alpha, beta, beta', gamma, delta, epsilon and zeta subunits.

The protein resides in the cytoplasm. It is found in the golgi apparatus membrane. Its subcellular location is the cytoplasmic vesicle. It localises to the COPI-coated vesicle membrane. In terms of biological role, the coatomer is a cytosolic protein complex that binds to dilysine motifs and reversibly associates with Golgi non-clathrin-coated vesicles, which further mediate biosynthetic protein transport from the ER, via the Golgi up to the trans Golgi network. Coatomer complex is required for budding from Golgi membranes, and is essential for the retrograde Golgi-to-ER transport of dilysine-tagged proteins. The zeta subunit may be involved in regulating the coat assembly and, hence, the rate of biosynthetic protein transport due to its association-dissociation properties with the coatomer complex. This chain is Coatomer subunit zeta, found in Encephalitozoon cuniculi (strain GB-M1) (Microsporidian parasite).